The sequence spans 979 residues: Putative disease resistance protein RGA1 (979 aa).

Positions 143–437 (GSVLTEPQVY…MAHGFLLSKG (295 aa)) constitute an NB-ARC domain. Residue 182–189 (GMGGLGKT) coordinates ATP. LRR repeat units lie at residues 524-547 (FVSL…IGDL), 549-570 (HLRY…RLCK), 571-594 (LQNL…QTSK), 595-619 (LGSL…GLLT), 637-661 (LGEL…KKDT), 748-773 (LPCL…VHPG), 823-841 (VKTL…SISN), 842-866 (LRAL…MFKS), 868-890 (ANLK…SLAS), 891-915 (LNAL…GVKG), 917-939 (TSLT…GLQH), and 940-965 (LTAL…IGED).

This sequence belongs to the disease resistance NB-LRR family.

Its function is as follows. Disease resistance protein. Resistance proteins guard the plant against pathogens that contain an appropriate avirulence protein via a direct or indirect interaction with this avirulence protein. That triggers a defense system which restricts the pathogen growth. The protein is Putative disease resistance protein RGA1 (RGA1) of Solanum bulbocastanum (Wild potato).